We begin with the raw amino-acid sequence, 183 residues long: Beta-defensin 129 (183 aa).

The first 19 residues, 1 to 19, serve as a signal peptide directing secretion; that stretch reads MKLLFPIFASLMLQYQVNT. 3 disulfides stabilise this stretch: Cys27–Cys53, Cys34–Cys48, and Cys38–Cys54. The disordered stretch occupies residues 141–183; that stretch reads TATSTKSNTKESRDSATASPPPAPPPPNILPTPSLELEEAEEQ. A compositionally biased stretch (pro residues) spans 159 to 170; the sequence is SPPPAPPPPNIL.

The protein belongs to the beta-defensin family.

Its subcellular location is the secreted. In terms of biological role, has antibacterial activity. In Pan troglodytes (Chimpanzee), this protein is Beta-defensin 129 (DEFB129).